We begin with the raw amino-acid sequence, 391 residues long: Acetyl-CoA acetyltransferase (391 aa).

The Acyl-thioester intermediate role is filled by Cys-88. Residues His-347 and Cys-377 each act as proton acceptor in the active site.

It belongs to the thiolase-like superfamily. Thiolase family. In terms of assembly, homotetramer.

The protein resides in the cytoplasm. It carries out the reaction 2 acetyl-CoA = acetoacetyl-CoA + CoA. Its pathway is metabolic intermediate biosynthesis; (R)-mevalonate biosynthesis; (R)-mevalonate from acetyl-CoA: step 1/3. In Paracoccus denitrificans, this protein is Acetyl-CoA acetyltransferase (phaA).